The primary structure comprises 204 residues: Thymidylate kinase (204 aa).

Glycine 11–threonine 18 is an ATP binding site.

It belongs to the thymidylate kinase family.

It catalyses the reaction dTMP + ATP = dTDP + ADP. Its pathway is pyrimidine metabolism; dTTP biosynthesis. This is Thymidylate kinase (TMK) from Camelus.